The sequence spans 63 residues: Potassium channel toxin alpha-KTx 21.1 (63 aa).

Positions 1–27 (MQFSGVVLILISMTLVNFVFFETKVEA) are cleaved as a signal peptide. 3 disulfides stabilise this stretch: Cys33-Cys53, Cys38-Cys58, and Cys42-Cys60.

It belongs to the short scorpion toxin superfamily. Potassium channel inhibitor family. Alpha-KTx 21 subfamily. In terms of tissue distribution, expressed by the venom gland.

The protein localises to the secreted. Its function is as follows. Reversibly and voltage-independently blocks voltage-gated potassium channels rKv1.2/KCNA2 (73%) (IC(50)=196 nM), hKv1.3/KCNA3 (50%) (IC(50)=508 nM), Shaker IR (30%), rKv1.6/KCNA6 (22%) (at 0.5 uM). Interaction of Ts15 with Kv1.3/KCNA3 is stronger than its interaction with Kv1.2/KCNA2. This is Potassium channel toxin alpha-KTx 21.1 from Tityus serrulatus (Brazilian scorpion).